We begin with the raw amino-acid sequence, 381 residues long: Transcription termination factor 4, mitochondrial (381 aa).

Residues 1-42 (MAAFGRQVLDWHRLIPLTWACMARQTPHLGEQRRTTASLLRK) constitute a mitochondrion transit peptide. MTERF repeat units follow at residues 142–172 (CVVL…LGLG), 177–204 (KRVL…LKEK), 209–239 (VQQV…YAYF), 245–270 (HPDI…YLER), and 290–318 (LKDI…VFKK). Residues 310 to 327 (VEEFQVFKKLLAREEEES) form a dimerization with NSUN4 region. A disordered region spans residues 322 to 381 (REEEESESSTSDDKRASLDEDEDDDDEEDNDEDDNDEDDDDEDDDEAEDNDEDEDDDEEE). Residues 340–381 (DEDEDDDDEEDNDEDDNDEDDDDEDDDEAEDNDEDEDDDEEE) show a composition bias toward acidic residues.

This sequence belongs to the mTERF family. Heterodimer with NSUN4; this interaction may be required for NSUN4 recruitment to the mitochondrial large ribosomal subunit. The mature mitochondrial protein exists in 2 forms differing at the level of their N-terminus, one is starting at residue 43 and the other at residue 48.

It is found in the mitochondrion. Regulator of mitochondrial ribosome biogenesis and translation. Binds to mitochondrial ribosomal RNAs 16S, 12S and 7S and targets NSUN4 RNA methyltransferase to the mitochondrial large ribosomal subunit (39S). The polypeptide is Transcription termination factor 4, mitochondrial (MTERF4) (Homo sapiens (Human)).